The primary structure comprises 208 residues: Large ribosomal subunit protein uL4 (208 aa).

Residues 45–77 (RQGTHKAKERAEIKGSTRKIKKQKGTGTARAGS) form a disordered region.

The protein belongs to the universal ribosomal protein uL4 family. Part of the 50S ribosomal subunit.

Its function is as follows. One of the primary rRNA binding proteins, this protein initially binds near the 5'-end of the 23S rRNA. It is important during the early stages of 50S assembly. It makes multiple contacts with different domains of the 23S rRNA in the assembled 50S subunit and ribosome. In terms of biological role, forms part of the polypeptide exit tunnel. The sequence is that of Large ribosomal subunit protein uL4 from Christiangramia forsetii (strain DSM 17595 / CGMCC 1.15422 / KT0803) (Gramella forsetii).